Reading from the N-terminus, the 400-residue chain is MAQENLQKIVDSLESSRAEREELYKWFHQHPEMSMQEHETSKRIAEELEKLGLEPQNIGVTGQVAVIKNGEGPSVAFRADFDALPITENTGLDYSADPELGMMHACGHDLHTTALLGAVRALVENKDLWSGTFIAVHQPGEEGGGGARHMVDDGLAEKIAAPDVCFAQHVFNEDPAFGYVFTPGRFLTAASNWRIHIHGEGGHGSRPHLTKDPIVVAASIITKLQTIVSREVDPNEVAVVTVGSIEGGKSTNSIPYTVTLGVNTRASNDELSEYVQNAIKRIVIAECQAAGIEQEPEFEYLDSVPAVINDEDLTEQLMAQFREFFGEDQAVEIPPLSGSEDYPFIPNAWGVPSVMWGWSGFAAGSDAPGNHTDKFAPELPDALERGTQAILVAAAPWLMK.

It belongs to the peptidase M20 family. Zn(2+) serves as cofactor.

It catalyses the reaction an N(2)-acyl-L-glutamine + H2O = a carboxylate + L-glutamine. The enzyme catalyses N(2)-[(2E)-3-methylhex-2-enoyl]-L-glutaminate + H2O = (2E)-3-methylhex-2-enoate + L-glutamine. It carries out the reaction N(2)-(3-hydroxy-3-methylhexanoyl)-L-glutaminate + H2O = 3-hydroxy-3-methylhexanoate + L-glutamine. With respect to regulation, partial loss of activity with the combination Mn(2+) and chelating agents. Activity is lost in presence of 0.5 mM dithiothreitol. Its function is as follows. Hydrolyzes odorless N-alpha-acyl-L-glutamine conjugates of short- and medium-chain fatty acids, releasing human axillary malodor compounds. The enzyme is highly specific for the glutamine residue but has a low specificity for the acyl part of the substrate. The two most common products are 3-methyl-2-hexenoic acid (3M2H) and 3-hydroxy-3-methyl-hexanoic acid (HMHA), which are produced from the odorless precursors N-alpha-3-methyl-2-hexenoyl-L-glutamine (3M2H-Gln) and N-alpha-3-hydroxy-3-methylhexanoyl-L-glutamine (HMHA-Gln). In addition, over 28 different carboxylic acids contributing to human body odor are released by this enzyme from odorless axilla secretions, including several aliphatic 3-hydroxy acids with 4-Me branches, 3,4-unsaturated, 4-Et-branched aliphatic acids, and a variety of degradation products of amino acids. The polypeptide is N(alpha)-acyl-glutamine aminoacylase (Corynebacterium striatum).